A 931-amino-acid chain; its full sequence is Protein unc-45 homolog B (931 aa).

TPR repeat units lie at residues 6 to 39, 43 to 76, and 77 to 110; these read AAQL…TKDK, ATLY…NSAD, and IKAL…EPRN. ARM repeat units lie at residues 169 to 208, 211 to 250, and 751 to 790; these read EAGA…GMCS, RARA…AIID, and DKLR…NMVL.

In terms of assembly, interacts with HSP90 in an ATP-independent manner. Interacts with UBE4B; the interaction may target UNC45B for proteasomal degradation. In terms of tissue distribution, highly expressed in adult skeletal muscle and heart. Detected at intermediate levels in lung. Highly expressed in embryonic heart.

It localises to the cytoplasm. Its subcellular location is the myofibril. The protein localises to the sarcomere. It is found in the z line. The protein resides in the a band. It localises to the perinuclear region. Its subcellular location is the cytosol. Functionally, acts as a co-chaperone for HSP90 and is required for proper folding of the myosin motor domain. Plays a role in sarcomere formation during muscle cell development. Is necessary for normal early lens development. The polypeptide is Protein unc-45 homolog B (Unc45b) (Mus musculus (Mouse)).